The primary structure comprises 106 residues: Small ribosomal subunit protein uS10 (106 aa).

Belongs to the universal ribosomal protein uS10 family. As to quaternary structure, part of the 30S ribosomal subunit.

Involved in the binding of tRNA to the ribosomes. This chain is Small ribosomal subunit protein uS10, found in Synechococcus sp. (strain RCC307).